Consider the following 324-residue polypeptide: Mitochondrial thiamine pyrophosphate carrier 1 (324 aa).

Solcar repeat units lie at residues 12–110, 119–205, and 212–307; these read GNRI…ISSA, PQPV…LRSP, and PFGT…VLGL. Transmembrane regions (helical) follow at residues 15–35, 79–99, 125–145, 182–202, 218–238, and 282–299; these read IQVVAAGATAGLVSRFCVAPL, ITGLWKGNIPAELLYICYGGI, FISGAVAGGIATTSTYPLDLL, TAAIAQIVPYMGLFFAGYEAL, AGAGVVASVIAKTGVFPLDLV, and GLTVSLIKAAPASAVTMW.

This sequence belongs to the mitochondrial carrier (TC 2.A.29) family.

The protein resides in the mitochondrion inner membrane. Mitochondrial transporter that mediates uptake of thiamine pyrophosphate (ThPP) into mitochondria. The sequence is that of Mitochondrial thiamine pyrophosphate carrier 1 (TPC1) from Ajellomyces capsulatus (strain NAm1 / WU24) (Darling's disease fungus).